The following is a 310-amino-acid chain: MKITVIGAGNVGATAALRIAEKQLAREVVLIDIVEGIPQGKALDMYESGPVALFDTRVSGSNDYRDSADSDIILITAGLARKPGMSREDLLQKNATIIKEVTSQVMQYSKNPILIMVSNPLDVMTYVARQVSGLPEERVIGMAGVLDTARFRSFIAEELQVSMQDINAFVLGGHGDSMVPVVKYTNVAGIPITELMSIEKINAIVERTKNGGIEIVNHLKTGSAFYAPAASAVEMIESIVKDRKRILPCTTCLKGQFGIQNVFCGAPVKLGRKGVEQILEINLSADELKALQQSASIVEQNCRNLDALLG.

Residues 7-12 and Asp-32 contribute to the NAD(+) site; that span reads GAGNVG. 2 residues coordinate substrate: Arg-81 and Arg-87. Residues Asn-94 and 117–119 each bind NAD(+); that span reads VSN. Substrate contacts are provided by Asn-119 and Arg-150. Residue His-174 is the Proton acceptor of the active site.

The protein belongs to the LDH/MDH superfamily. MDH type 3 family.

It catalyses the reaction (S)-malate + NAD(+) = oxaloacetate + NADH + H(+). Catalyzes the reversible oxidation of malate to oxaloacetate. This chain is Malate dehydrogenase, found in Chlorobium luteolum (strain DSM 273 / BCRC 81028 / 2530) (Pelodictyon luteolum).